Consider the following 429-residue polypeptide: Ribosomal protein uS12 methylthiotransferase RimO (429 aa).

The MTTase N-terminal domain occupies 2–118 (HNIFLLSLGC…VLRAIGAEYR (117 aa)). [4Fe-4S] cluster-binding residues include Cys11, Cys47, Cys81, Cys142, Cys146, and Cys149. Residues 128-357 (LTPPHYAFLK…MELQETISQE (230 aa)) form the Radical SAM core domain. The TRAM domain occupies 360–427 (REFEGNEIVV…PYDLEGEVIG (68 aa)).

This sequence belongs to the methylthiotransferase family. RimO subfamily. Requires [4Fe-4S] cluster as cofactor.

Its subcellular location is the cytoplasm. It catalyses the reaction L-aspartate(89)-[ribosomal protein uS12]-hydrogen + (sulfur carrier)-SH + AH2 + 2 S-adenosyl-L-methionine = 3-methylsulfanyl-L-aspartate(89)-[ribosomal protein uS12]-hydrogen + (sulfur carrier)-H + 5'-deoxyadenosine + L-methionine + A + S-adenosyl-L-homocysteine + 2 H(+). Its function is as follows. Catalyzes the methylthiolation of an aspartic acid residue of ribosomal protein uS12. The sequence is that of Ribosomal protein uS12 methylthiotransferase RimO from Chlorobium limicola (strain DSM 245 / NBRC 103803 / 6330).